The primary structure comprises 137 residues: Lysozyme (137 aa).

The first 20 residues, 1-20 (MQRLLGSIVILATVFTFCEA), serve as a signal peptide directing secretion. Residues 21–135 (TISSACLRCI…EKVHQQGCNV (115 aa)) enclose the I-type lysozyme domain. 6 disulfides stabilise this stretch: Cys-26–Cys-102, Cys-31–Cys-37, Cys-42–Cys-51, Cys-64–Cys-84, Cys-74–Cys-80, and Cys-98–Cys-116. The Proton donor role is filled by Glu-34. The active-site Nucleophile is Asp-45. Substrate is bound at residue 57–63 (KENYWED). Substrate contacts are provided by residues Tyr-88 and 109 to 111 (HNG).

The protein belongs to the glycosyl hydrolase 22 family. Type-I lysozyme subfamily. In terms of tissue distribution, expressed in the basophil cells of the oyster digestive gland.

It localises to the secreted. It carries out the reaction Hydrolysis of (1-&gt;4)-beta-linkages between N-acetylmuramic acid and N-acetyl-D-glucosamine residues in a peptidoglycan and between N-acetyl-D-glucosamine residues in chitodextrins.. Its function is as follows. Has bacteriolytic activity. May play a role in digestion and in the host defense mechanisms against invading microbes. The protein is Lysozyme (lysoz) of Magallana gigas (Pacific oyster).